Consider the following 569-residue polypeptide: Small ribosomal subunit protein bS1 (569 aa).

6 consecutive S1 motif domains span residues 52–116, 134–199, 220–288, 305–375, 392–462, and 479–548; these read GAIL…LSRE, GSIV…VSRR, GERR…LGLK, GKRV…LGLK, GLRV…LGVK, and GSDI…LSIK.

This sequence belongs to the bacterial ribosomal protein bS1 family.

Functionally, binds mRNA; thus facilitating recognition of the initiation point. It is needed to translate mRNA with a short Shine-Dalgarno (SD) purine-rich sequence. The polypeptide is Small ribosomal subunit protein bS1 (rpsA) (Chlamydia trachomatis serovar D (strain ATCC VR-885 / DSM 19411 / UW-3/Cx)).